The primary structure comprises 123 residues: Large ribosomal subunit protein bL19c (123 aa).

It belongs to the bacterial ribosomal protein bL19 family.

It is found in the plastid. The protein localises to the chloroplast. The sequence is that of Large ribosomal subunit protein bL19c (rpl19) from Porphyra purpurea (Red seaweed).